The chain runs to 118 residues: Large ribosomal subunit protein uL18 (118 aa).

The protein belongs to the universal ribosomal protein uL18 family. In terms of assembly, part of the 50S ribosomal subunit; part of the 5S rRNA/L5/L18/L25 subcomplex. Contacts the 5S and 23S rRNAs.

This is one of the proteins that bind and probably mediate the attachment of the 5S RNA into the large ribosomal subunit, where it forms part of the central protuberance. The protein is Large ribosomal subunit protein uL18 of Cupriavidus pinatubonensis (strain JMP 134 / LMG 1197) (Cupriavidus necator (strain JMP 134)).